Here is a 188-residue protein sequence, read N- to C-terminus: dCTP deaminase (188 aa).

DCTP-binding positions include 111–116 (KSTYAR), 135–137 (TLE), Gln156, Tyr170, and Gln180. The active-site Proton donor/acceptor is the Glu137.

The protein belongs to the dCTP deaminase family. Homotrimer.

The catalysed reaction is dCTP + H2O + H(+) = dUTP + NH4(+). It functions in the pathway pyrimidine metabolism; dUMP biosynthesis; dUMP from dCTP (dUTP route): step 1/2. Functionally, catalyzes the deamination of dCTP to dUTP. The sequence is that of dCTP deaminase from Thiobacillus denitrificans (strain ATCC 25259 / T1).